We begin with the raw amino-acid sequence, 2552 residues long: Probable polyketide synthase 40 (2552 aa).

In terms of domain architecture, Ketosynthase family 3 (KS3) spans 13–443; it reads CNKVAIIGIG…GSNCCLIVSS (431 aa). Catalysis depends on for beta-ketoacyl synthase activity residues C179, H320, and H362. Positions 629 to 662 are acyl/malonyl transferase; it reads GIKPSIIVGHSLGEISSSYCSGMIDLDTFCYLIY. S639 serves as the catalytic For acyl/malonyl transferase activity. The tract at residues 928–1063 is N-terminal hotdog fold; that stretch reads INHLGISNSN…ANFQLFSRGQ (136 aa). One can recognise a PKS/mFAS DH domain in the interval 928-1235; that stretch reads INHLGISNSN…FKSTTKIKDS (308 aa). The active-site Proton acceptor; for dehydratase activity is H962. The C-terminal hotdog fold stretch occupies residues 1087 to 1235; that stretch reads NLTKLSKQEL…FKSTTKIKDS (149 aa). D1149 serves as the catalytic Proton donor; for dehydratase activity. One can recognise a Carrier domain in the interval 2467–2546; it reads DNVELTVDQL…SFIQLVKNSI (80 aa). S2505 is modified (O-(pantetheine 4'-phosphoryl)serine).

Requires pantetheine 4'-phosphate as cofactor.

Its function is as follows. Probable polyketide synthase. This is Probable polyketide synthase 40 (pks40) from Dictyostelium discoideum (Social amoeba).